The sequence spans 122 residues: Large ribosomal subunit protein uL14 (122 aa).

It belongs to the universal ribosomal protein uL14 family. Part of the 50S ribosomal subunit. Forms a cluster with proteins L3 and L19. In the 70S ribosome, L14 and L19 interact and together make contacts with the 16S rRNA in bridges B5 and B8.

In terms of biological role, binds to 23S rRNA. Forms part of two intersubunit bridges in the 70S ribosome. The protein is Large ribosomal subunit protein uL14 of Erythrobacter litoralis (strain HTCC2594).